A 301-amino-acid polypeptide reads, in one-letter code: Acetylglutamate kinase (301 aa).

Residues 68–69 (GG), Arg90, and Asn195 contribute to the substrate site.

This sequence belongs to the acetylglutamate kinase family. ArgB subfamily.

The protein resides in the cytoplasm. The catalysed reaction is N-acetyl-L-glutamate + ATP = N-acetyl-L-glutamyl 5-phosphate + ADP. The protein operates within amino-acid biosynthesis; L-arginine biosynthesis; N(2)-acetyl-L-ornithine from L-glutamate: step 2/4. In terms of biological role, catalyzes the ATP-dependent phosphorylation of N-acetyl-L-glutamate. The chain is Acetylglutamate kinase from Ectopseudomonas mendocina (strain ymp) (Pseudomonas mendocina).